A 49-amino-acid chain; its full sequence is Large ribosomal subunit protein bL33 (49 aa).

The protein belongs to the bacterial ribosomal protein bL33 family.

The polypeptide is Large ribosomal subunit protein bL33 (Fervidobacterium nodosum (strain ATCC 35602 / DSM 5306 / Rt17-B1)).